The sequence spans 181 residues: Protein GrpE (181 aa).

Residues 1–10 (MENTQENPAT) show a composition bias toward polar residues. Positions 1-33 (MENTQENPATPSAEDIGSEKQAAQGAAPAAEAA) are disordered. Residues 21–33 (QAAQGAAPAAEAA) show a composition bias toward low complexity.

This sequence belongs to the GrpE family. In terms of assembly, homodimer.

The protein resides in the cytoplasm. Its function is as follows. Participates actively in the response to hyperosmotic and heat shock by preventing the aggregation of stress-denatured proteins, in association with DnaK and GrpE. It is the nucleotide exchange factor for DnaK and may function as a thermosensor. Unfolded proteins bind initially to DnaJ; upon interaction with the DnaJ-bound protein, DnaK hydrolyzes its bound ATP, resulting in the formation of a stable complex. GrpE releases ADP from DnaK; ATP binding to DnaK triggers the release of the substrate protein, thus completing the reaction cycle. Several rounds of ATP-dependent interactions between DnaJ, DnaK and GrpE are required for fully efficient folding. The protein is Protein GrpE of Burkholderia cenocepacia (strain ATCC BAA-245 / DSM 16553 / LMG 16656 / NCTC 13227 / J2315 / CF5610) (Burkholderia cepacia (strain J2315)).